Reading from the N-terminus, the 120-residue chain is NAD(P)H-quinone oxidoreductase subunit 3, chloroplastic (120 aa).

The next 3 membrane-spanning stretches (helical) occupy residues 9-29 (IFWTFLIIASLIPILAFSISG), 64-84 (MFALVFVVFDVETVFLYPWAM), and 88-108 (VLGVSVFIEALIFVLILVVGL).

The protein belongs to the complex I subunit 3 family. In terms of assembly, NDH is composed of at least 16 different subunits, 5 of which are encoded in the nucleus.

The protein localises to the plastid. It is found in the chloroplast thylakoid membrane. It catalyses the reaction a plastoquinone + NADH + (n+1) H(+)(in) = a plastoquinol + NAD(+) + n H(+)(out). It carries out the reaction a plastoquinone + NADPH + (n+1) H(+)(in) = a plastoquinol + NADP(+) + n H(+)(out). NDH shuttles electrons from NAD(P)H:plastoquinone, via FMN and iron-sulfur (Fe-S) centers, to quinones in the photosynthetic chain and possibly in a chloroplast respiratory chain. The immediate electron acceptor for the enzyme in this species is believed to be plastoquinone. Couples the redox reaction to proton translocation, and thus conserves the redox energy in a proton gradient. The protein is NAD(P)H-quinone oxidoreductase subunit 3, chloroplastic of Hordeum vulgare (Barley).